A 109-amino-acid chain; its full sequence is Nucleoid-associated protein Ssed_2851 (109 aa).

The protein belongs to the YbaB/EbfC family. Homodimer.

The protein resides in the cytoplasm. It is found in the nucleoid. Functionally, binds to DNA and alters its conformation. May be involved in regulation of gene expression, nucleoid organization and DNA protection. In Shewanella sediminis (strain HAW-EB3), this protein is Nucleoid-associated protein Ssed_2851.